Consider the following 172-residue polypeptide: Crossover junction endodeoxyribonuclease RuvC (172 aa).

Catalysis depends on residues Asp12, Glu71, and Asp143. Positions 12, 71, and 143 each coordinate Mg(2+).

Belongs to the RuvC family. In terms of assembly, homodimer which binds Holliday junction (HJ) DNA. The HJ becomes 2-fold symmetrical on binding to RuvC with unstacked arms; it has a different conformation from HJ DNA in complex with RuvA. In the full resolvosome a probable DNA-RuvA(4)-RuvB(12)-RuvC(2) complex forms which resolves the HJ. Requires Mg(2+) as cofactor.

The protein localises to the cytoplasm. The catalysed reaction is Endonucleolytic cleavage at a junction such as a reciprocal single-stranded crossover between two homologous DNA duplexes (Holliday junction).. Its function is as follows. The RuvA-RuvB-RuvC complex processes Holliday junction (HJ) DNA during genetic recombination and DNA repair. Endonuclease that resolves HJ intermediates. Cleaves cruciform DNA by making single-stranded nicks across the HJ at symmetrical positions within the homologous arms, yielding a 5'-phosphate and a 3'-hydroxyl group; requires a central core of homology in the junction. The consensus cleavage sequence is 5'-(A/T)TT(C/G)-3'. Cleavage occurs on the 3'-side of the TT dinucleotide at the point of strand exchange. HJ branch migration catalyzed by RuvA-RuvB allows RuvC to scan DNA until it finds its consensus sequence, where it cleaves and resolves the cruciform DNA. This Coxiella burnetii (strain CbuG_Q212) (Coxiella burnetii (strain Q212)) protein is Crossover junction endodeoxyribonuclease RuvC.